The following is a 491-amino-acid chain: Protein nucleotidyltransferase YdiU (491 aa).

Positions 94, 96, 97, 117, 129, 130, 180, and 187 each coordinate ATP. The Proton acceptor role is filled by aspartate 256. Mg(2+) is bound by residues asparagine 257 and aspartate 266. ATP is bound at residue aspartate 266.

The protein belongs to the SELO family. It depends on Mg(2+) as a cofactor. Requires Mn(2+) as cofactor.

It carries out the reaction L-seryl-[protein] + ATP = 3-O-(5'-adenylyl)-L-seryl-[protein] + diphosphate. It catalyses the reaction L-threonyl-[protein] + ATP = 3-O-(5'-adenylyl)-L-threonyl-[protein] + diphosphate. The catalysed reaction is L-tyrosyl-[protein] + ATP = O-(5'-adenylyl)-L-tyrosyl-[protein] + diphosphate. The enzyme catalyses L-histidyl-[protein] + UTP = N(tele)-(5'-uridylyl)-L-histidyl-[protein] + diphosphate. It carries out the reaction L-seryl-[protein] + UTP = O-(5'-uridylyl)-L-seryl-[protein] + diphosphate. It catalyses the reaction L-tyrosyl-[protein] + UTP = O-(5'-uridylyl)-L-tyrosyl-[protein] + diphosphate. Its function is as follows. Nucleotidyltransferase involved in the post-translational modification of proteins. It can catalyze the addition of adenosine monophosphate (AMP) or uridine monophosphate (UMP) to a protein, resulting in modifications known as AMPylation and UMPylation. The chain is Protein nucleotidyltransferase YdiU from Clostridium botulinum (strain 657 / Type Ba4).